We begin with the raw amino-acid sequence, 323 residues long: Fos-related antigen 2 (323 aa).

Residues 1-27 show a composition bias toward low complexity; sequence MYQDYPGSFDTSSRGSSGSPGHPEPYS. Positions 1–31 are disordered; sequence MYQDYPGSFDTSSRGSSGSPGHPEPYSAGAA. In terms of domain architecture, bZIP spans 124–187; it reads EEKRRIRRER…EKLEFMLVAH (64 aa). The segment at 126–128 is basic motif; the sequence is KRR. Residues 129 to 136 form a leucine-zipper region; the sequence is IRRERNKL. 2 disordered regions span residues 194 to 214 and 288 to 323; these read SPEE…TGAS and ESPL…LLAL. The span at 305-317 shows a compositional bias: low complexity; it reads SSSGDQSSDSLNS.

It belongs to the bZIP family. Fos subfamily. In terms of assembly, heterodimer with JUN.

It localises to the nucleus. In Gallus gallus (Chicken), this protein is Fos-related antigen 2 (FOSL2).